Consider the following 491-residue polypeptide: Chromosomal replication initiator protein DnaA (491 aa).

The interval 1 to 86 (MTDELNSQFT…VEALSRRLGE (86 aa)) is domain I, interacts with DnaA modulators. A domain II region spans residues 86-150 (ENVELGVRIA…GADKAETPDT (65 aa)). A domain III, AAA+ region region spans residues 151 to 367 (SLNARYTFES…GALIRVTAFA (217 aa)). ATP-binding residues include G195, G197, K198, and T199. The tract at residues 368–491 (SLNKSPIELS…TARIRQRSRH (124 aa)) is domain IV, binds dsDNA.

The protein belongs to the DnaA family. As to quaternary structure, oligomerizes as a right-handed, spiral filament on DNA at oriC.

It is found in the cytoplasm. Functionally, plays an essential role in the initiation and regulation of chromosomal replication. ATP-DnaA binds to the origin of replication (oriC) to initiate formation of the DNA replication initiation complex once per cell cycle. Binds the DnaA box (a 9 base pair repeat at the origin) and separates the double-stranded (ds)DNA. Forms a right-handed helical filament on oriC DNA; dsDNA binds to the exterior of the filament while single-stranded (ss)DNA is stabiized in the filament's interior. The ATP-DnaA-oriC complex binds and stabilizes one strand of the AT-rich DNA unwinding element (DUE), permitting loading of DNA polymerase. After initiation quickly degrades to an ADP-DnaA complex that is not apt for DNA replication. Binds acidic phospholipids. This Mycobacteroides abscessus (strain ATCC 19977 / DSM 44196 / CCUG 20993 / CIP 104536 / JCM 13569 / NCTC 13031 / TMC 1543 / L948) (Mycobacterium abscessus) protein is Chromosomal replication initiator protein DnaA.